Reading from the N-terminus, the 421-residue chain is Gamma-glutamyl phosphate reductase (421 aa).

This sequence belongs to the gamma-glutamyl phosphate reductase family.

The protein resides in the cytoplasm. It carries out the reaction L-glutamate 5-semialdehyde + phosphate + NADP(+) = L-glutamyl 5-phosphate + NADPH + H(+). The protein operates within amino-acid biosynthesis; L-proline biosynthesis; L-glutamate 5-semialdehyde from L-glutamate: step 2/2. Catalyzes the NADPH-dependent reduction of L-glutamate 5-phosphate into L-glutamate 5-semialdehyde and phosphate. The product spontaneously undergoes cyclization to form 1-pyrroline-5-carboxylate. In Pseudomonas aeruginosa (strain ATCC 15692 / DSM 22644 / CIP 104116 / JCM 14847 / LMG 12228 / 1C / PRS 101 / PAO1), this protein is Gamma-glutamyl phosphate reductase.